The sequence spans 594 residues: Invasin CotH2 (594 aa).

An N-terminal signal peptide occupies residues 1 to 19; it reads MKLSLTIVSSSFLVAIAHA. N77, N162, N226, N316, N441, N519, and N533 each carry an N-linked (GlcNAc...) asparagine glycan. The segment at 529–565 is disordered; that stretch reads PPAANGTATSTNDGGNTHTAAGESKPASSSESSGSKI. Over residues 534–547 the composition is skewed to polar residues; it reads GTATSTNDGGNTHT. Positions 548-565 are enriched in low complexity; that stretch reads AAGESKPASSSESSGSKI. A lipid anchor (GPI-anchor amidated serine) is attached at S571. The propeptide at 572–594 is removed in mature form; it reads GASRSAVSTVLLGVTALVATAIF.

As to quaternary structure, interacts with host epithelial cell surface HSPA5/BiP protein.

Its subcellular location is the cell membrane. Its function is as follows. Promotes invasion of host epithelial cells by adhering to receptors on the host cell surface to facilitate endocytosis of the pathogen into host cells. Binds HSPA5/BiP protein on the cell surface of host epithelial cells. The polypeptide is Invasin CotH2 (Rhizopus delemar (strain RA 99-880 / ATCC MYA-4621 / FGSC 9543 / NRRL 43880) (Mucormycosis agent)).